Here is a 128-residue protein sequence, read N- to C-terminus: Large ribosomal subunit protein uL22 (128 aa).

A disordered region spans residues 1 to 22 (MARGHRSQIKRERNANKDTRPS). The segment covering 9–21 (IKRERNANKDTRP) has biased composition (basic and acidic residues).

The protein belongs to the universal ribosomal protein uL22 family. As to quaternary structure, part of the 50S ribosomal subunit.

Functionally, this protein binds specifically to 23S rRNA; its binding is stimulated by other ribosomal proteins, e.g. L4, L17, and L20. It is important during the early stages of 50S assembly. It makes multiple contacts with different domains of the 23S rRNA in the assembled 50S subunit and ribosome. In terms of biological role, the globular domain of the protein is located near the polypeptide exit tunnel on the outside of the subunit, while an extended beta-hairpin is found that lines the wall of the exit tunnel in the center of the 70S ribosome. The chain is Large ribosomal subunit protein uL22 from Lachnoclostridium phytofermentans (strain ATCC 700394 / DSM 18823 / ISDg) (Clostridium phytofermentans).